A 129-amino-acid polypeptide reads, in one-letter code: Small ribosomal subunit protein uS11 (129 aa).

It belongs to the universal ribosomal protein uS11 family. In terms of assembly, part of the 30S ribosomal subunit. Interacts with proteins S7 and S18. Binds to IF-3.

Located on the platform of the 30S subunit, it bridges several disparate RNA helices of the 16S rRNA. Forms part of the Shine-Dalgarno cleft in the 70S ribosome. This Hamiltonella defensa subsp. Acyrthosiphon pisum (strain 5AT) protein is Small ribosomal subunit protein uS11.